Consider the following 557-residue polypeptide: Suprabasin (557 aa).

A signal peptide spans 1-23; it reads MHLASLLSSCSLLLLLGALPGWA. Disordered stretches follow at residues 150–175, 422–441, 464–490, and 509–533; these read RFGQ…GAHH, GQGA…KVAQ, AAGQ…GKQE, and NQLL…TTLT. A compositionally biased stretch (low complexity) spans 153–175; it reads QGAHHATGQAGKEAEKFGQGAHH. The span at 476-487 shows a compositional bias: low complexity; sequence GQGVHHAAGQAG.

The protein resides in the secreted. This Bos taurus (Bovine) protein is Suprabasin (SBSN).